The sequence spans 133 residues: Fluoride-specific ion channel FluC 4 (133 aa).

3 helical membrane passes run 7–27, 37–57, and 60–80; these read ILVLVGGFIGGVMRFFLSGYV, WGTFVVNVSGAFVIGTAAGLG, and LGGIFSTTIFHEFIMVGLLGG. Na(+) contacts are provided by G79 and T82. Residues 107-127 traverse the membrane as a helical segment; it reads IVASALLCVLAVAAGYGGIMW.

The protein belongs to the fluoride channel Fluc/FEX (TC 1.A.43) family.

Its subcellular location is the cell inner membrane. It catalyses the reaction fluoride(in) = fluoride(out). Na(+) is not transported, but it plays an essential structural role and its presence is essential for fluoride channel function. Fluoride-specific ion channel. Important for reducing fluoride concentration in the cell, thus reducing its toxicity. This is Fluoride-specific ion channel FluC 4 from Brucella abortus biovar 1 (strain 9-941).